A 191-amino-acid polypeptide reads, in one-letter code: GTP-binding protein CIN4 (191 aa).

GTP-binding positions include 23–30 (GLDNSGKS), 69–73 (DIGGQ), and 131–134 (NKID).

Functionally, implicated in yeast microtubule function. The sequence is that of GTP-binding protein CIN4 (CIN4) from Saccharomyces cerevisiae (strain ATCC 204508 / S288c) (Baker's yeast).